Reading from the N-terminus, the 287-residue chain is Protease HtpX (287 aa).

The next 2 membrane-spanning stretches (helical) occupy residues 4-24 (VFLL…VMSI) and 33-53 (GGLL…SLAI). His139 serves as a coordination point for Zn(2+). The active site involves Glu140. A Zn(2+)-binding site is contributed by His143. The next 2 helical transmembrane spans lie at 154 to 174 (LIQG…AGII) and 195 to 215 (GVVF…VAYF). Glu220 lines the Zn(2+) pocket.

The protein belongs to the peptidase M48B family. Zn(2+) serves as cofactor.

Its subcellular location is the cell inner membrane. The chain is Protease HtpX from Shewanella denitrificans (strain OS217 / ATCC BAA-1090 / DSM 15013).